Reading from the N-terminus, the 109-residue chain is MSPHYIGTMADAADHDAGQDVRLRARVEGVVQAVGFRYWTVRKAEELSLTGTVRNEDDGTVAVVVEGPQSVVLEFRRWLGSDDAPGRVDHVEESVSPATGEFSSFDVVY.

The Acylphosphatase-like domain occupies 22–109; the sequence is RLRARVEGVV…GEFSSFDVVY (88 aa). Residues Arg37 and Asn55 contribute to the active site.

Belongs to the acylphosphatase family.

The catalysed reaction is an acyl phosphate + H2O = a carboxylate + phosphate + H(+). The chain is Acylphosphatase (acyP) from Arthrobacter sp. (strain FB24).